The following is a 1267-amino-acid chain: MVEAGGARRHRMTLESGDHTLTLFAYRTGPFRTILFYALTVLTLGIFRLILHWKQKWDVKMRMVPCTFEAAEYIYIIDNHNVSELQPVLRKSNATIPTENGEMRKVPELRWFVYRKLEYVWIDDLNSDESVDEISDNDNCWKTSFEIANRIPCRSLLAVSESNFGLTLSEISRRLEFYGRNEIVVQLRPILYLLVMEVITPFYVFQIFSVTVWYNDEYAYYASLIVILSLGSIVMDVYQIRTQEIRLRSMVHSTESVEVIREGTEMTIGSDQLVPGDILLIPPHGCLMQCDSVLMNGTVIVNESVLTGESVPITKVALTDETNDSVFNIEKNSKNVLFCGTQVLQTRFYRGKKVKAIVLRTAYSTLKGQLVRSIMYPKPVDFRFTKDLFKFILFLACISGCGFIYTIIVMIMRGNTLRRIIVRSLDIITITVPPALPAAMSVGIINAQLRLKKKEIFCISPSTINTCGAINVVCFDKTGTLTEDGLDFHVVRPVMSAVNQEIQKVKLEKSNRTEFMGEMTELTSRNGLPFDGDLVKAIATCHSLTRINGVLHGDPLDLILFQKTGWTMEEGIEGDIEEETQRFDNVQPSIIKPTDDKSAEYSVIRQFTFSSSLQRMSVIVFDPREDRPDNMMLYSKGSPEMILSLCDPNTVPEDYLLQVNSYAQHGFRLIAVARRPLDLNFNKASKVKRDAVECDLEMLGLIVMENRVKPVTLGVINQLNRANIRTVMVTGDNLLTGLSVARECGIIRPSKRAFLVEHVPGELDEYGRTKIFVKQSVSSSDEVIEDDASVSISMCSSTWKGSSEGDGFSPTNTEVETPNPVTADSLGHLIASSYHLAISGPTFAVIVHEYPELVDQLCSVCDVFARMAPDQKQSLVEQLQQIDYTVAMCGDGANDCAALKAAHAGISLSDAEASIAAPFTSKVPDIRCVPTVISEGRAALVTSFGIFKYMAGYSLTQFVTVMHLYWISNILTDGQFMYIDMFLITMFALLFGNTPAFYRLAHTPPPTRLLSIASMTSVVGQLIIIGVVQFIVFFSTSQQPWFTPYQPPVDDEVEDKRSMQGTALFCVSMFQYIILALVYSKGPPFRGNLWSNKPMCALTIFATLLCLFIVIWPTELVLKTLGNVELPSLTFRIFIVIVGAVNAAVSYGFETLFVDFFLLGYWERYKKKRSIEAIIDYVPTTNSDHIRRPSINGVTSSRTESTLLSAEGQQLHMTTSKNGKGGENPHSSALFERLISRIGGEPTWLTNPIPPHSLSEPEEPEKLERTY.

At 1 to 32 (MVEAGGARRHRMTLESGDHTLTLFAYRTGPFR) the chain is on the extracellular side. A helical transmembrane segment spans residues 33–53 (TILFYALTVLTLGIFRLILHW). Topologically, residues 54-189 (KQKWDVKMRM…RNEIVVQLRP (136 aa)) are cytoplasmic. Residues 190–210 (ILYLLVMEVITPFYVFQIFSV) form a helical membrane-spanning segment. The Extracellular portion of the chain corresponds to 211–217 (TVWYNDE). A helical transmembrane segment spans residues 218–238 (YAYYASLIVILSLGSIVMDVY). Residues 239-390 (QIRTQEIRLR…DFRFTKDLFK (152 aa)) are Cytoplasmic-facing. A helical membrane pass occupies residues 391 to 411 (FILFLACISGCGFIYTIIVMI). Topologically, residues 412–424 (MRGNTLRRIIVRS) are extracellular. Residues 425–445 (LDIITITVPPALPAAMSVGII) form a helical membrane-spanning segment. Topologically, residues 446 to 950 (NAQLRLKKKE…VTSFGIFKYM (505 aa)) are cytoplasmic. Asp476 functions as the 4-aspartylphosphate intermediate in the catalytic mechanism. The Mg(2+) site is built by Asp891 and Asp895. Residues 951–971 (AGYSLTQFVTVMHLYWISNIL) traverse the membrane as a helical segment. The Extracellular segment spans residues 972–976 (TDGQF). The chain crosses the membrane as a helical span at residues 977-997 (MYIDMFLITMFALLFGNTPAF). The Cytoplasmic portion of the chain corresponds to 998 to 1013 (YRLAHTPPPTRLLSIA). The helical transmembrane segment at 1014–1034 (SMTSVVGQLIIIGVVQFIVFF) threads the bilayer. The Extracellular segment spans residues 1035 to 1058 (STSQQPWFTPYQPPVDDEVEDKRS). A helical membrane pass occupies residues 1059–1079 (MQGTALFCVSMFQYIILALVY). The Cytoplasmic portion of the chain corresponds to 1080–1097 (SKGPPFRGNLWSNKPMCA). A helical membrane pass occupies residues 1098 to 1118 (LTIFATLLCLFIVIWPTELVL). Over 1119–1132 (KTLGNVELPSLTFR) the chain is Extracellular. The helical transmembrane segment at 1133-1153 (IFIVIVGAVNAAVSYGFETLF) threads the bilayer. Residues 1154–1267 (VDFFLLGYWE…EEPEKLERTY (114 aa)) are Cytoplasmic-facing. Positions 1232 to 1256 (ERLISRIGGEPTWLTNPIPPHSLSE) are disordered.

Belongs to the cation transport ATPase (P-type) (TC 3.A.3) family. Type V subfamily.

The protein resides in the membrane. The enzyme catalyses ATP + H2O = ADP + phosphate + H(+). The polypeptide is Probable cation-transporting ATPase catp-6 (Caenorhabditis elegans).